Consider the following 582-residue polypeptide: Two-component response regulator ORR26 (582 aa).

Residues 11 to 126 (RVLVVDDDPT…ELRNIWQHVY (116 aa)) enclose the Response regulatory domain. Position 62 is a 4-aspartylphosphate (D62). A compositionally biased stretch (basic and acidic residues) spans 166–182 (SDTMRKRKDVDKDHADQ). The segment at 166 to 187 (SDTMRKRKDVDKDHADQESSDG) is disordered. Positions 189 to 248 (TVKKARVVWSVDLHQKFVNAVNQIGFDKVGPKKILDLMNVPGLTRENVASHLQKYRLYLS) form a DNA-binding region, myb-like GARP.

Belongs to the ARR family. Type-B subfamily. Two-component system major event consists of a His-to-Asp phosphorelay between a sensor histidine kinase (HK) and a response regulator (RR). In plants, the His-to-Asp phosphorelay involves an additional intermediate named Histidine-containing phosphotransfer protein (HPt). This multistep phosphorelay consists of a His-Asp-His-Asp sequential transfer of a phosphate group between first a His and an Asp of the HK protein, followed by the transfer to a conserved His of the HPt protein and finally the transfer to an Asp in the receiver domain of the RR protein.

Its subcellular location is the nucleus. Functionally, transcriptional activator that binds specific DNA sequence. Functions as a response regulator involved in His-to-Asp phosphorelay signal transduction system. Phosphorylation of the Asp residue in the receiver domain activates the ability of the protein to promote the transcription of target genes. May directly activate some type-A response regulators in response to cytokinins. The sequence is that of Two-component response regulator ORR26 from Oryza sativa subsp. japonica (Rice).